An 84-amino-acid polypeptide reads, in one-letter code: U4-theraphotoxin-Hhn1a (84 aa).

Positions 1-22 are cleaved as a signal peptide; the sequence is MKVTLIAILTRAAVLVLHTTAA. Positions 23–47 are excised as a propeptide; that stretch reads EELEESQLMEVSMPDTELAAVDEER. Intrachain disulfides connect Cys-51–Cys-65, Cys-55–Cys-76, and Cys-70–Cys-81.

It belongs to the neurotoxin 12 (Hwtx-2) family. 02 (Hwtx-2) subfamily. Expressed by the venom gland.

It is found in the secreted. Its function is as follows. Postsynaptic neurotoxin. The polypeptide is U4-theraphotoxin-Hhn1a (Cyriopagopus hainanus (Chinese bird spider)).